Here is a 353-residue protein sequence, read N- to C-terminus: NADH-quinone oxidoreductase subunit H (353 aa).

9 helical membrane-spanning segments follow: residues Leu8–Trp28, Gly75–Ile95, Ile108–Gly128, Val148–Leu168, Val179–Glu199, Leu229–Phe249, Leu258–Val278, Phe297–Pro317, and Ile319–Phe339.

The protein belongs to the complex I subunit 1 family. In terms of assembly, NDH-1 is composed of 14 different subunits. Subunits NuoA, H, J, K, L, M, N constitute the membrane sector of the complex.

It localises to the cell membrane. It catalyses the reaction a quinone + NADH + 5 H(+)(in) = a quinol + NAD(+) + 4 H(+)(out). NDH-1 shuttles electrons from NADH, via FMN and iron-sulfur (Fe-S) centers, to quinones in the respiratory chain. The immediate electron acceptor for the enzyme in this species is believed to be ubiquinone. Couples the redox reaction to proton translocation (for every two electrons transferred, four hydrogen ions are translocated across the cytoplasmic membrane), and thus conserves the redox energy in a proton gradient. This subunit may bind ubiquinone. This chain is NADH-quinone oxidoreductase subunit H, found in Dehalococcoides mccartyi (strain CBDB1).